The following is a 205-amino-acid chain: Probable thymidylate kinase (205 aa).

Position 10–17 (10–17 (GIDGSGKT)) interacts with ATP.

It belongs to the thymidylate kinase family.

The enzyme catalyses dTMP + ATP = dTDP + ADP. The protein is Probable thymidylate kinase (tmk) of Pyrococcus abyssi (strain GE5 / Orsay).